Here is a 116-residue protein sequence, read N- to C-terminus: uncharacterized protein (116 aa).

The segment at 76–116 (VPPPRYSYIRSESSRNNLRNSARNQPQNLVSEQDSDSNREN) is disordered. Residues 85-99 (RSESSRNNLRNSARN) show a composition bias toward low complexity.

This is an uncharacterized protein from Glycine max (Soybean).